Reading from the N-terminus, the 212-residue chain is Imidazole glycerol phosphate synthase subunit HisH (212 aa).

Positions Arg3–Thr208 constitute a Glutamine amidotransferase type-1 domain. The active-site Nucleophile is Cys81. Active-site residues include His183 and Glu185.

In terms of assembly, heterodimer of HisH and HisF.

Its subcellular location is the cytoplasm. The catalysed reaction is 5-[(5-phospho-1-deoxy-D-ribulos-1-ylimino)methylamino]-1-(5-phospho-beta-D-ribosyl)imidazole-4-carboxamide + L-glutamine = D-erythro-1-(imidazol-4-yl)glycerol 3-phosphate + 5-amino-1-(5-phospho-beta-D-ribosyl)imidazole-4-carboxamide + L-glutamate + H(+). It catalyses the reaction L-glutamine + H2O = L-glutamate + NH4(+). The protein operates within amino-acid biosynthesis; L-histidine biosynthesis; L-histidine from 5-phospho-alpha-D-ribose 1-diphosphate: step 5/9. Functionally, IGPS catalyzes the conversion of PRFAR and glutamine to IGP, AICAR and glutamate. The HisH subunit catalyzes the hydrolysis of glutamine to glutamate and ammonia as part of the synthesis of IGP and AICAR. The resulting ammonia molecule is channeled to the active site of HisF. This Symbiobacterium thermophilum (strain DSM 24528 / JCM 14929 / IAM 14863 / T) protein is Imidazole glycerol phosphate synthase subunit HisH.